Consider the following 141-residue polypeptide: Large ribosomal subunit protein uL16 (141 aa).

Belongs to the universal ribosomal protein uL16 family. In terms of assembly, part of the 50S ribosomal subunit.

In terms of biological role, binds 23S rRNA and is also seen to make contacts with the A and possibly P site tRNAs. The polypeptide is Large ribosomal subunit protein uL16 (Campylobacter concisus (strain 13826)).